The following is a 56-amino-acid chain: PI-stichotoxin-Hcr2o (56 aa).

Residues 4–54 (CLEPKVVGPCKARIRRFYFDSETGKCTPFIYGGCGGNGNNFETLHACRAIC) form the BPTI/Kunitz inhibitor domain. Intrachain disulfides connect Cys4/Cys54, Cys13/Cys37, and Cys29/Cys50.

The protein belongs to the venom Kunitz-type family. Sea anemone type 2 potassium channel toxin subfamily.

Its subcellular location is the secreted. The protein resides in the nematocyst. Its function is as follows. This recombinant serine protease inhibitor inhibits both trypsin (Ki=21 nM) and chymotrypsin (Ki=500 nM). It possesses anti-inflammatory activity in vitro. It inhibits macrophage LPS-induced nitric oxide synthesis, and blocks histamine influence on intracellular calcium concentration in murine bone marrow-derived macrophages, which can indicate inhibition of H1-histamine receptor (HRH1). In vitro, it shows cytoprotective activity in the oxidative stress agent 6-hydroxydopamine (6-OHDA)-induced neurotoxicity model. In this model, it decreases reactive oxygen species (ROS) levels, and increases cell viability in a correlated manner. It is possible that the observed effect is due to the ability of this peptides to act as free-radical scavenger. In vivo, it shows analgesic activity, since it increases hot plate and tail flick withdrawal latencies, when using a mice thermal pain stimulation model. This is PI-stichotoxin-Hcr2o from Radianthus crispa (Leathery sea anemone).